A 429-amino-acid polypeptide reads, in one-letter code: Violacein synthase (429 aa).

R3 to A21 is a binding site for FAD.

FAD serves as cofactor.

It carries out the reaction protoviolaceinate + NADPH + O2 + H(+) = violaceinate + NADP(+) + H2O. The enzyme catalyses protoviolaceinate + NADH + O2 + H(+) = violaceinate + NAD(+) + H2O. It catalyses the reaction protodeoxyviolaceinate + NADPH + O2 + H(+) = deoxyviolaceinate + NADP(+) + H2O. The catalysed reaction is protodeoxyviolaceinate + NADH + O2 + H(+) = deoxyviolaceinate + NAD(+) + H2O. It functions in the pathway pigment biosynthesis; violacein biosynthesis. In terms of biological role, catalyzes the hydroxylation of the 16-position of protoviolaceinate and protodeoxyviolaceinate to form violacein and deoxyviolacein, respectively. In Chromobacterium violaceum (strain ATCC 12472 / DSM 30191 / JCM 1249 / CCUG 213 / NBRC 12614 / NCIMB 9131 / NCTC 9757 / MK), this protein is Violacein synthase (vioC).